Consider the following 285-residue polypeptide: Trypsin Tyr p 3.0101 (285 aa).

Residues 1-16 (MKILLFLCFLVSVAFA) form the signal peptide. A propeptide spanning residues 17-33 (KPPTIQLKSNTKSQNGF) is cleaved from the precursor. A Peptidase S1 domain is found at 34-262 (IVGGTEAVDG…YLDWIELSAK (229 aa)). A disulfide bridge links C58 with C74. Residues H73 and D120 each act as charge relay system in the active site. Disulfide bonds link C186-C202 and C214-C238. The active-site Charge relay system is S218.

The protein belongs to the peptidase S1 family.

The protein localises to the secreted. It carries out the reaction Preferential cleavage: Arg-|-Xaa, Lys-|-Xaa.. With respect to regulation, inhibited by the serine protease inhibitor phenylmethylsulfonyl, and trypsin inhibitors soybean trypsin inhibitor and tosyllysine chloromethyl ketone. Not inhibited by dithiothreitol, a cysteine protease inhibitor. Digests TAMe (p-toluene arginine methyl ester), but not ethyl N-benzoyl-L-tyrosinate (BTEE). This chain is Trypsin Tyr p 3.0101, found in Tyrophagus putrescentiae (Mold mite).